Consider the following 101-residue polypeptide: NAD(P)H-quinone oxidoreductase subunit 4L, chloroplastic (101 aa).

A run of 3 helical transmembrane segments spans residues 2 to 22, 32 to 52, and 61 to 81; these read MLEH…YGLI, MCLE…SDFF, and IFSI…LAIV.

This sequence belongs to the complex I subunit 4L family. In terms of assembly, NDH is composed of at least 16 different subunits, 5 of which are encoded in the nucleus.

It is found in the plastid. The protein resides in the chloroplast thylakoid membrane. It carries out the reaction a plastoquinone + NADH + (n+1) H(+)(in) = a plastoquinol + NAD(+) + n H(+)(out). It catalyses the reaction a plastoquinone + NADPH + (n+1) H(+)(in) = a plastoquinol + NADP(+) + n H(+)(out). In terms of biological role, NDH shuttles electrons from NAD(P)H:plastoquinone, via FMN and iron-sulfur (Fe-S) centers, to quinones in the photosynthetic chain and possibly in a chloroplast respiratory chain. The immediate electron acceptor for the enzyme in this species is believed to be plastoquinone. Couples the redox reaction to proton translocation, and thus conserves the redox energy in a proton gradient. The sequence is that of NAD(P)H-quinone oxidoreductase subunit 4L, chloroplastic from Panax ginseng (Korean ginseng).